A 302-amino-acid polypeptide reads, in one-letter code: UDP-N-acetylenolpyruvoylglucosamine reductase (302 aa).

In terms of domain architecture, FAD-binding PCMH-type spans 31-213 (KIGGPADFLI…KKIREFREKR (183 aa)). Arg176 is a catalytic residue. The active-site Proton donor is the Ser226. Glu296 is an active-site residue.

This sequence belongs to the MurB family. FAD is required as a cofactor.

The protein localises to the cytoplasm. It catalyses the reaction UDP-N-acetyl-alpha-D-muramate + NADP(+) = UDP-N-acetyl-3-O-(1-carboxyvinyl)-alpha-D-glucosamine + NADPH + H(+). The protein operates within cell wall biogenesis; peptidoglycan biosynthesis. Its function is as follows. Cell wall formation. The sequence is that of UDP-N-acetylenolpyruvoylglucosamine reductase from Carboxydothermus hydrogenoformans (strain ATCC BAA-161 / DSM 6008 / Z-2901).